A 100-amino-acid chain; its full sequence is NADH-quinone oxidoreductase subunit K (100 aa).

3 helical membrane-spanning segments follow: residues 1 to 21, 28 to 48, and 64 to 84; these read MIGLNHYLIVSGLLFCIGLAG, ILLLFFSTEIMLNAINIGFVA, and FIIAIAASEVAIGLGLVILWF.

This sequence belongs to the complex I subunit 4L family. As to quaternary structure, NDH-1 is composed of 14 different subunits. Subunits NuoA, H, J, K, L, M, N constitute the membrane sector of the complex.

The protein resides in the cell inner membrane. The enzyme catalyses a quinone + NADH + 5 H(+)(in) = a quinol + NAD(+) + 4 H(+)(out). In terms of biological role, NDH-1 shuttles electrons from NADH, via FMN and iron-sulfur (Fe-S) centers, to quinones in the respiratory chain. The immediate electron acceptor for the enzyme in this species is believed to be ubiquinone. Couples the redox reaction to proton translocation (for every two electrons transferred, four hydrogen ions are translocated across the cytoplasmic membrane), and thus conserves the redox energy in a proton gradient. The polypeptide is NADH-quinone oxidoreductase subunit K (Helicobacter pylori (strain Shi470)).